Consider the following 249-residue polypeptide: Adenosylcobinamide-GDP ribazoletransferase (249 aa).

Transmembrane regions (helical) follow at residues 36–56 (LVGF…HSIG), 57–77 (LNLA…GGLH), 106–126 (VGAM…AFLF), 133–153 (KLTA…LAIT), 188–208 (LWLF…ITWL), and 226–246 (GALG…GQQI).

The protein belongs to the CobS family. Requires Mg(2+) as cofactor.

Its subcellular location is the cell membrane. It carries out the reaction alpha-ribazole + adenosylcob(III)inamide-GDP = adenosylcob(III)alamin + GMP + H(+). The catalysed reaction is alpha-ribazole 5'-phosphate + adenosylcob(III)inamide-GDP = adenosylcob(III)alamin 5'-phosphate + GMP + H(+). The protein operates within cofactor biosynthesis; adenosylcobalamin biosynthesis; adenosylcobalamin from cob(II)yrinate a,c-diamide: step 7/7. In terms of biological role, joins adenosylcobinamide-GDP and alpha-ribazole to generate adenosylcobalamin (Ado-cobalamin). Also synthesizes adenosylcobalamin 5'-phosphate from adenosylcobinamide-GDP and alpha-ribazole 5'-phosphate. This is Adenosylcobinamide-GDP ribazoletransferase from Desulforamulus reducens (strain ATCC BAA-1160 / DSM 100696 / MI-1) (Desulfotomaculum reducens).